Consider the following 235-residue polypeptide: UPF0758 protein CD630_11440 (235 aa).

In terms of domain architecture, MPN spans 113-235; that stretch reads KIMNPWDIQR…YFSFKENMII (123 aa). Zn(2+) contacts are provided by His-184, His-186, and Asp-197. The JAMM motif motif lies at 184-197; that stretch reads HNHPSGSVEPSRED.

Belongs to the UPF0758 family.

The protein is UPF0758 protein CD630_11440 of Clostridioides difficile (strain 630) (Peptoclostridium difficile).